Reading from the N-terminus, the 314-residue chain is Small ribosomal subunit biogenesis GTPase RsgA (314 aa).

A CP-type G domain is found at 78 to 238 (SEIFREKLIA…IIDSPGFQEF (161 aa)). GTP contacts are provided by residues 127 to 130 (NKID) and 180 to 188 (GQSGVGKST). Zn(2+)-binding residues include Cys262, Cys267, His269, and Cys275.

Belongs to the TRAFAC class YlqF/YawG GTPase family. RsgA subfamily. As to quaternary structure, monomer. Associates with 30S ribosomal subunit, binds 16S rRNA. Zn(2+) serves as cofactor.

The protein localises to the cytoplasm. Functionally, one of several proteins that assist in the late maturation steps of the functional core of the 30S ribosomal subunit. Helps release RbfA from mature subunits. May play a role in the assembly of ribosomal proteins into the subunit. Circularly permuted GTPase that catalyzes slow GTP hydrolysis, GTPase activity is stimulated by the 30S ribosomal subunit. In Nitrosomonas europaea (strain ATCC 19718 / CIP 103999 / KCTC 2705 / NBRC 14298), this protein is Small ribosomal subunit biogenesis GTPase RsgA.